We begin with the raw amino-acid sequence, 381 residues long: Arf-GAP with dual PH domain-containing protein 2 (381 aa).

Residues 9–132 (KRLLELLQAA…TAIDKAVSHP (124 aa)) form the Arf-GAP domain. Residues 25-48 (CADCGAADPDWASYKLGIFICLHC) form a C4-type zinc finger. PH domains lie at 132–233 (PGNR…AARL) and 255–361 (NYLK…GVLS).

It localises to the cytoplasm. Its subcellular location is the cell membrane. Its function is as follows. GTPase-activating protein for the ADP ribosylation factor family (Potential). Binds phosphatidylinositol 3,4,5-trisphosphate (PtdInsP3) and inositol 1,3,4,5-tetrakisphosphate (InsP4). Possesses a stoichiometry of two binding sites for InsP4 with identical affinity. This chain is Arf-GAP with dual PH domain-containing protein 2 (Adap2), found in Mus musculus (Mouse).